The sequence spans 265 residues: Acyl-[acyl-carrier-protein]--UDP-N-acetylglucosamine O-acyltransferase (265 aa).

This sequence belongs to the transferase hexapeptide repeat family. LpxA subfamily. Homotrimer.

The protein resides in the cytoplasm. The enzyme catalyses a (3R)-hydroxyacyl-[ACP] + UDP-N-acetyl-alpha-D-glucosamine = a UDP-3-O-[(3R)-3-hydroxyacyl]-N-acetyl-alpha-D-glucosamine + holo-[ACP]. It participates in glycolipid biosynthesis; lipid IV(A) biosynthesis; lipid IV(A) from (3R)-3-hydroxytetradecanoyl-[acyl-carrier-protein] and UDP-N-acetyl-alpha-D-glucosamine: step 1/6. Its function is as follows. Involved in the biosynthesis of lipid A, a phosphorylated glycolipid that anchors the lipopolysaccharide to the outer membrane of the cell. The sequence is that of Acyl-[acyl-carrier-protein]--UDP-N-acetylglucosamine O-acyltransferase from Polynucleobacter asymbioticus (strain DSM 18221 / CIP 109841 / QLW-P1DMWA-1) (Polynucleobacter necessarius subsp. asymbioticus).